The chain runs to 359 residues: MQTLADLLNTIPAIDPAAMSRAQRHIDGLLKPVGSLGRLEALAIQLAGMPGLNGIPHVGKKAVLVMCADHGVWEEGVAISPKEVTAIQAENMTRGTTGVCVLAAQAGANVHVVDVGIDSAEPIPGLINMRVARGSGNIASAPAMSRRQAEKLLLDVICYTRELAKNGVTLFGVGELGMANTTPAAAIVSTITGRDPEEVVGIGANLPTDKLANKIDVVRRAITLNQPNPQDGIDVLAKVGGFDLVGIAGVMLGAASCGLPVLLDGFLSYAAALAACQMSPAIKPYLIPSHLSVEKGARIALSHLGLEPYLNMDMRLGEGSGAALAMPIIEAACAIYNNMGELAASNIVLPGNTTSDLNS.

The active-site Proton acceptor is the glutamate 318.

Belongs to the CobT family. In terms of assembly, homodimer.

The enzyme catalyses 5,6-dimethylbenzimidazole + nicotinate beta-D-ribonucleotide = alpha-ribazole 5'-phosphate + nicotinate + H(+). It functions in the pathway nucleoside biosynthesis; alpha-ribazole biosynthesis; alpha-ribazole from 5,6-dimethylbenzimidazole: step 1/2. Functionally, catalyzes the synthesis of alpha-ribazole-5'-phosphate from nicotinate mononucleotide (NAMN) and 5,6-dimethylbenzimidazole (DMB). This chain is Nicotinate-nucleotide--dimethylbenzimidazole phosphoribosyltransferase, found in Escherichia coli O9:H4 (strain HS).